The primary structure comprises 247 residues: tRNA pseudouridine synthase A 1 (247 aa).

The active-site Nucleophile is the Asp53. Position 111 (Tyr111) interacts with substrate.

The protein belongs to the tRNA pseudouridine synthase TruA family. Homodimer.

The enzyme catalyses uridine(38/39/40) in tRNA = pseudouridine(38/39/40) in tRNA. Functionally, formation of pseudouridine at positions 38, 39 and 40 in the anticodon stem and loop of transfer RNAs. This chain is tRNA pseudouridine synthase A 1, found in Bacillus cereus (strain ATCC 14579 / DSM 31 / CCUG 7414 / JCM 2152 / NBRC 15305 / NCIMB 9373 / NCTC 2599 / NRRL B-3711).